The sequence spans 356 residues: Nicotinate-nucleotide--dimethylbenzimidazole phosphoribosyltransferase (356 aa).

Residue glutamate 317 is the Proton acceptor of the active site.

The protein belongs to the CobT family. Homodimer.

It catalyses the reaction 5,6-dimethylbenzimidazole + nicotinate beta-D-ribonucleotide = alpha-ribazole 5'-phosphate + nicotinate + H(+). It functions in the pathway nucleoside biosynthesis; alpha-ribazole biosynthesis; alpha-ribazole from 5,6-dimethylbenzimidazole: step 1/2. Its function is as follows. Catalyzes the synthesis of alpha-ribazole-5'-phosphate from nicotinate mononucleotide (NAMN) and 5,6-dimethylbenzimidazole (DMB). This Salmonella paratyphi C (strain RKS4594) protein is Nicotinate-nucleotide--dimethylbenzimidazole phosphoribosyltransferase.